The chain runs to 604 residues: MSGAGEHSDEESYGEESFEEDSESEVEVEEEEIEYIEPEESKPSDALLLGESDTQSESDVKEEFLSGNPHARRYLGARVVSYLSSSSDDESQVVITKTVAEVNQLSLRVDTPPEDETPSVRTLMPGSAHSRVKDEDEAEDEDDDEGDGENDNDNEDENDDEDAEVEEIEEEEEEIPGDEDDAQSDGSMGRQSADDSDEEEGTDVEVEQLEEDEPIVTAVCKKTVQKELPPPQKDIVSLVDASDNSSEHSVVTMCASGDETDNTLVKYPRLRKQQPLTAKDSQSLKEQEEPEEPEQPEENQTEEHMPTSQPDLARVRYLEQQMTQMSELIMKSFQINGGAPNSQAFEQLAMATEMLQQRSDRRGDTESEMSSMTETTMTSARSLGGGIPPLTMRMERSQEALLTTRSSKLPRPKCRCPSESDLIEHEQKLDMGHELPHDLAANFGLGEGYLVDECGQGDGLMRHPQQRKPMELNRRAVSGTPSTFNSDGCEYQINVSRSRCSNDKINYKNLGRKSFSFTNPQVREIERQNQILLRKMMTVKPTATIKASTSSIKINGPEKRQTPPAPRLSSAAVNRKKNQRQIDLDNDLLKRKLEAIGTRRPQFK.

Disordered regions lie at residues Met1–His70, Asn103–Gln309, Ser359–Ile387, and Thr544–Asp585. Composition is skewed to acidic residues over residues Ser8–Pro38, Glu135–Gln183, Asp194–Pro214, and Glu288–Gln300. Low complexity predominate over residues Glu368–Ser379.

The protein belongs to the CFAP97 family. As to expression, detected in ciliated sensory neurons at all stages of development, and in adult testis.

It localises to the cell projection. The protein resides in the cilium. Its subcellular location is the perikaryon. The protein localises to the cytoplasm. Involved in assembly and/or maintenance of motile cilia. Required during spermatogenesis for axoneme elongation. Necessary for optimal function of the chordotonal (hearing) organs. In Drosophila melanogaster (Fruit fly), this protein is Protein hemingway.